A 285-amino-acid polypeptide reads, in one-letter code: Cell division protein ZipA (285 aa).

A topological domain (periplasmic) is located at residue methionine 1. The chain crosses the membrane as a helical span at residues 2–22 (EIGLREWLIVIGIVVIGGILF). At 23 to 285 (DGWRRMRGSK…FERRQLTHKR (263 aa)) the chain is on the cytoplasmic side. The disordered stretch occupies residues 49–88 (AVSENSELLGPSRSVDFPQGAGFEPDEENLPSLSVRGPSR).

It belongs to the ZipA family. Interacts with FtsZ via their C-terminal domains.

It is found in the cell inner membrane. Its function is as follows. Essential cell division protein that stabilizes the FtsZ protofilaments by cross-linking them and that serves as a cytoplasmic membrane anchor for the Z ring. Also required for the recruitment to the septal ring of downstream cell division proteins. In Azotobacter vinelandii (strain DJ / ATCC BAA-1303), this protein is Cell division protein ZipA.